Reading from the N-terminus, the 319-residue chain is Ribonuclease Z (319 aa).

Residues His62, His64, Asp66, His67, His145, Asp215, and His273 each contribute to the Zn(2+) site. Catalysis depends on Asp66, which acts as the Proton acceptor.

This sequence belongs to the RNase Z family. As to quaternary structure, homodimer. Zn(2+) is required as a cofactor.

It carries out the reaction Endonucleolytic cleavage of RNA, removing extra 3' nucleotides from tRNA precursor, generating 3' termini of tRNAs. A 3'-hydroxy group is left at the tRNA terminus and a 5'-phosphoryl group is left at the trailer molecule.. Its function is as follows. Zinc phosphodiesterase, which displays some tRNA 3'-processing endonuclease activity. Probably involved in tRNA maturation, by removing a 3'-trailer from precursor tRNA. The sequence is that of Ribonuclease Z from Borreliella burgdorferi (strain ATCC 35210 / DSM 4680 / CIP 102532 / B31) (Borrelia burgdorferi).